The primary structure comprises 98 residues: Cell division topological specificity factor (98 aa).

This sequence belongs to the MinE family.

Prevents the cell division inhibition by proteins MinC and MinD at internal division sites while permitting inhibition at polar sites. This ensures cell division at the proper site by restricting the formation of a division septum at the midpoint of the long axis of the cell. This chain is Cell division topological specificity factor, found in Nitrosomonas europaea (strain ATCC 19718 / CIP 103999 / KCTC 2705 / NBRC 14298).